A 183-amino-acid chain; its full sequence is Ribonuclease H (183 aa).

The RNase H type-1 domain maps to 2–151 (SQARFIAFSD…VDQLAQAAAR (150 aa)). Asp11, Glu57, Asp79, and Asp143 together coordinate Mg(2+).

It belongs to the RNase H family. As to quaternary structure, monomer. Mg(2+) serves as cofactor.

Its subcellular location is the cytoplasm. It carries out the reaction Endonucleolytic cleavage to 5'-phosphomonoester.. In terms of biological role, endonuclease that specifically degrades the RNA of RNA-DNA hybrids. The chain is Ribonuclease H from Anaeromyxobacter dehalogenans (strain 2CP-1 / ATCC BAA-258).